Reading from the N-terminus, the 542-residue chain is Carbamoyl phosphate synthase large chain, C-terminal section (542 aa).

Residues 1–389 are carbamoyl phosphate synthetic domain; sequence MSDKVLVIGA…WKAQLAAGHE (389 aa). In terms of domain architecture, ATP-grasp spans 122–316; that stretch reads SKLLKKLGIP…LAKIGTKAIL (195 aa). Residues arginine 158, arginine 197, isoleucine 199, glutamate 204, glycine 230, valine 231, histidine 232, serine 233, glutamine 273, and glutamate 287 each contribute to the ATP site. Positions 273, 287, and 289 each coordinate Mg(2+). Glutamine 273, glutamate 287, and asparagine 289 together coordinate Mn(2+). Positions 388 to 542 constitute an MGS-like domain; that stretch reads HELPLEGTAV…KPEELTRYGG (155 aa). Residues 390–542 are allosteric domain; the sequence is LPLEGTAVIS…KPEELTRYGG (153 aa).

This sequence belongs to the CarB family. Composed of two chains; the small (or glutamine) chain promotes the hydrolysis of glutamine to ammonia, which is used by the large (or ammonia) chain to synthesize carbamoyl phosphate. Tetramer of heterodimers (alpha,beta)4. Mg(2+) serves as cofactor. Mn(2+) is required as a cofactor.

The enzyme catalyses hydrogencarbonate + L-glutamine + 2 ATP + H2O = carbamoyl phosphate + L-glutamate + 2 ADP + phosphate + 2 H(+). It catalyses the reaction hydrogencarbonate + NH4(+) + 2 ATP = carbamoyl phosphate + 2 ADP + phosphate + 2 H(+). Its pathway is amino-acid biosynthesis; L-arginine biosynthesis; carbamoyl phosphate from bicarbonate: step 1/1. The protein operates within pyrimidine metabolism; UMP biosynthesis via de novo pathway; (S)-dihydroorotate from bicarbonate: step 1/3. Functionally, large subunit of the glutamine-dependent carbamoyl phosphate synthetase (CPSase). CPSase catalyzes the formation of carbamoyl phosphate from the ammonia moiety of glutamine, carbonate, and phosphate donated by ATP, constituting the first step of 2 biosynthetic pathways, one leading to arginine and/or urea and the other to pyrimidine nucleotides. The large subunit (synthetase) binds the substrates ammonia (free or transferred from glutamine from the small subunit), hydrogencarbonate and ATP and carries out an ATP-coupled ligase reaction, activating hydrogencarbonate by forming carboxy phosphate which reacts with ammonia to form carbamoyl phosphate. This chain is Carbamoyl phosphate synthase large chain, C-terminal section (carB2), found in Methanopyrus kandleri (strain AV19 / DSM 6324 / JCM 9639 / NBRC 100938).